Here is a 129-residue protein sequence, read N- to C-terminus: Large ribosomal subunit protein uL22 (129 aa).

It belongs to the universal ribosomal protein uL22 family. Part of the 50S ribosomal subunit.

Its function is as follows. This protein binds specifically to 23S rRNA; its binding is stimulated by other ribosomal proteins, e.g. L4, L17, and L20. It is important during the early stages of 50S assembly. It makes multiple contacts with different domains of the 23S rRNA in the assembled 50S subunit and ribosome. Functionally, the globular domain of the protein is located near the polypeptide exit tunnel on the outside of the subunit, while an extended beta-hairpin is found that lines the wall of the exit tunnel in the center of the 70S ribosome. The sequence is that of Large ribosomal subunit protein uL22 from Sinorhizobium medicae (strain WSM419) (Ensifer medicae).